The chain runs to 128 residues: Peptidyl-prolyl cis-trans isomerase NIMA-interacting 4 (128 aa).

The tract at residues 1-34 (MPPKGKGGKGAKGAAASGSGDSDKKEKAQKGGTA) is disordered. The 95-residue stretch at 32–126 (GTAVKVRHIL…FGYHIIMVEG (95 aa)) folds into the PpiC domain.

This sequence belongs to the PpiC/parvulin rotamase family. PIN4 subfamily.

It is found in the nucleus. The protein resides in the nucleolus. Its subcellular location is the cytoplasm. The protein localises to the cytoskeleton. It localises to the spindle. It catalyses the reaction [protein]-peptidylproline (omega=180) = [protein]-peptidylproline (omega=0). Functionally, may be involved as a ribosomal RNA processing factor in ribosome biogenesis. Binds to DNA. This Danio rerio (Zebrafish) protein is Peptidyl-prolyl cis-trans isomerase NIMA-interacting 4 (pin4).